A 237-amino-acid polypeptide reads, in one-letter code: MNIFDRKINFDALLKFSHITPSTQQHLKKVYASFALCMFVAAAGAYVHVVTRFIQAGLLSALGALALMICLMATPHSHETEQKRLGLLAGFAFLTGVGLGPALELCIAINPSILPTAFMGTAMIFTCFSLSALYARRRSYLFLGGILMSAMSLMFVSSLGNLFFGSIWLFQANLYMGLLVMCGFVLFDTQLIIEKAEHGDKDYIWHCIDLFLDFVTLFRKLMLILAFNEKDKKKEKK.

Residues 1–29 lie on the Cytoplasmic side of the membrane; that stretch reads MNIFDRKINFDALLKFSHITPSTQQHLKK. Lys-7 is covalently cross-linked (Glycyl lysine isopeptide (Lys-Gly) (interchain with G-Cter in ubiquitin)). The helical transmembrane segment at 30–50 threads the bilayer; sequence VYASFALCMFVAAAGAYVHVV. Residues 51–52 are Lumenal-facing; that stretch reads TR. The helical transmembrane segment at 53-73 threads the bilayer; sequence FIQAGLLSALGALALMICLMA. Topologically, residues 74-86 are cytoplasmic; that stretch reads TPHSHETEQKRLG. A helical membrane pass occupies residues 87 to 107; it reads LLAGFAFLTGVGLGPALELCI. Topologically, residues 108-112 are lumenal; the sequence is AINPS. The helical transmembrane segment at 113 to 133 threads the bilayer; that stretch reads ILPTAFMGTAMIFTCFSLSAL. At 134–139 the chain is on the cytoplasmic side; sequence YARRRS. The chain crosses the membrane as a helical span at residues 140–160; sequence YLFLGGILMSAMSLMFVSSLG. Residues 161 to 166 lie on the Lumenal side of the membrane; that stretch reads NLFFGS. The helical transmembrane segment at 167-187 threads the bilayer; sequence IWLFQANLYMGLLVMCGFVLF. Topologically, residues 188–206 are cytoplasmic; the sequence is DTQLIIEKAEHGDKDYIWH. Positions 207–227 form an intramembrane region, helical; sequence CIDLFLDFVTLFRKLMLILAF. The Cytoplasmic portion of the chain corresponds to 228–237; sequence NEKDKKKEKK.

The protein belongs to the BI1 family. As to quaternary structure, interacts with BCL2 and BCL2L1. Interacts with ERN1. Ubiquitinated by BFAR, leading to proteasomal degradation. In terms of tissue distribution, highly abundant in adult testis.

The protein localises to the endoplasmic reticulum membrane. Functionally, endoplasmic reticulum (ER)-resident protein that confers cellular protection as an anti-apoptotic protein by limiting multiple stress-inducing pathways surrounding the endoplasmic reticulum and mitochondria. Inhibits the activities of the key sensor for the endoplasmic reticulum unfolded protein response IRE1alpha/ERN1 both directly and by blocking BAX/BAK binding. Modulates ER calcium homeostasis by acting as a calcium-leak channel. Negatively regulates autophagy and autophagosome formation, especially during periods of nutrient deprivation, and reduces cell survival during starvation. This is Bax inhibitor 1 (Tmbim6) from Rattus norvegicus (Rat).